Reading from the N-terminus, the 201-residue chain is MEGKAAVTTSTEHGDGEASRTAARTVVSGSSRGGAASRALSVADLILRVVAVVAIVDSAIAMGTTNQTLPFFTQFLRFKAQYSDLPTLTLFVVANSAVTAYLVLSIPLSVVHIIRSRASYSRLVLIFLDSVMLALVAAVASASAAIVYLAHKGNVRANWFAVCQQFDSFCERISGPLIGSFAAMAVLLLLVLLSAAALARR.

Residues 1 to 23 (MEGKAAVTTSTEHGDGEASRTAA) form a disordered region. Residues 1–41 (MEGKAAVTTSTEHGDGEASRTAARTVVSGSSRGGAASRALS) are Cytoplasmic-facing. The helical transmembrane segment at 42 to 62 (VADLILRVVAVVAIVDSAIAM) threads the bilayer. The Extracellular segment spans residues 63 to 87 (GTTNQTLPFFTQFLRFKAQYSDLPT). N-linked (GlcNAc...) asparagine glycosylation occurs at N66. Residues 88-108 (LTLFVVANSAVTAYLVLSIPL) traverse the membrane as a helical segment. At 109 to 122 (SVVHIIRSRASYSR) the chain is on the cytoplasmic side. The chain crosses the membrane as a helical span at residues 123-143 (LVLIFLDSVMLALVAAVASAS). Residues 144-172 (AAIVYLAHKGNVRANWFAVCQQFDSFCER) are Extracellular-facing. A helical transmembrane segment spans residues 173–193 (ISGPLIGSFAAMAVLLLLVLL). At 194–201 (SAAALARR) the chain is on the cytoplasmic side.

The protein belongs to the Casparian strip membrane proteins (CASP) family. As to quaternary structure, homodimer and heterodimers.

It localises to the cell membrane. Regulates membrane-cell wall junctions and localized cell wall deposition. Required for establishment of the Casparian strip membrane domain (CSD) and the subsequent formation of Casparian strips, a cell wall modification of the root endodermis that determines an apoplastic barrier between the intraorganismal apoplasm and the extraorganismal apoplasm and prevents lateral diffusion. The protein is Casparian strip membrane protein 4 of Oryza sativa subsp. japonica (Rice).